A 167-amino-acid polypeptide reads, in one-letter code: Photosystem I assembly protein Ycf3 (167 aa).

3 TPR repeats span residues 35–68 (AFAYYRDGMSAQAEGEYAEALQNYYEAMRLEVDA), 72–105 (SYILYNIGLIHTSNGEHAKALEYYYQAIERNPSL), and 120–153 (GEQAIEEGNSEAAEILFDQAASYWKQAIRLAPTS).

It belongs to the Ycf3 family.

The protein localises to the plastid. The protein resides in the chloroplast thylakoid membrane. In terms of biological role, essential for the assembly of the photosystem I (PSI) complex. May act as a chaperone-like factor to guide the assembly of the PSI subunits. The protein is Photosystem I assembly protein Ycf3 of Chlorokybus atmophyticus (Soil alga).